The sequence spans 270 residues: Putative phosphoenolpyruvate synthase regulatory protein (270 aa).

150–157 (GVSRCGKT) is a binding site for ADP.

It belongs to the pyruvate, phosphate/water dikinase regulatory protein family. PSRP subfamily.

It catalyses the reaction [pyruvate, water dikinase] + ADP = [pyruvate, water dikinase]-phosphate + AMP + H(+). It carries out the reaction [pyruvate, water dikinase]-phosphate + phosphate + H(+) = [pyruvate, water dikinase] + diphosphate. Bifunctional serine/threonine kinase and phosphorylase involved in the regulation of the phosphoenolpyruvate synthase (PEPS) by catalyzing its phosphorylation/dephosphorylation. This chain is Putative phosphoenolpyruvate synthase regulatory protein, found in Shewanella amazonensis (strain ATCC BAA-1098 / SB2B).